The chain runs to 134 residues: Arginine decarboxylase proenzyme (134 aa).

The active-site Schiff-base intermediate with substrate; via pyruvic acid is S82. The residue at position 82 (S82) is a Pyruvic acid (Ser); by autocatalysis. H87 functions as the Proton acceptor; for processing activity in the catalytic mechanism. Residue C102 is the Proton donor; for catalytic activity of the active site.

It belongs to the prokaryotic AdoMetDC family. Type 1 subfamily. In terms of assembly, heterooctamer of four alpha and four beta chains arranged as a tetramer of alpha/beta heterodimers. Pyruvate serves as cofactor. Is synthesized initially as an inactive proenzyme. Formation of the active enzyme involves a self-maturation process in which the active site pyruvoyl group is generated from an internal serine residue via an autocatalytic post-translational modification. Two non-identical subunits are generated from the proenzyme in this reaction, and the pyruvate is formed at the N-terminus of the alpha chain, which is derived from the carboxyl end of the proenzyme. The post-translation cleavage follows an unusual pathway, termed non-hydrolytic serinolysis, in which the side chain hydroxyl group of the serine supplies its oxygen atom to form the C-terminus of the beta chain, while the remainder of the serine residue undergoes an oxidative deamination to produce ammonia and the pyruvoyl group blocking the N-terminus of the alpha chain.

The enzyme catalyses L-arginine + H(+) = agmatine + CO2. It participates in amine and polyamine biosynthesis; agmatine biosynthesis; agmatine from L-arginine: step 1/1. Highly competitively inhibited by L-argininamide and L-arginine methyl ester. Also inhibited by alpha-difluoromethylarginine. Is not stimulated by potassium chloride as observed for other decarboxylases. Its function is as follows. Specifically catalyzes the decarboxylation of L-arginine to agmatine. Is also able to decarboxylate L-canavanine, although less efficiently. Has no S-adenosylmethionine decarboxylase (AdoMetDC) activity. The protein is Arginine decarboxylase proenzyme of Saccharolobus solfataricus (strain ATCC 35092 / DSM 1617 / JCM 11322 / P2) (Sulfolobus solfataricus).